The chain runs to 81 residues: Cytochrome c oxidase subunit NDUFA4 (81 aa).

Over 1–14 (MLRHILGLAKKHPS) the chain is Mitochondrial matrix. Lys10 is modified (N6-acetyllysine). Residues 15–37 (LIPLFVFLGTGATGATLYLLRLA) form a helical membrane-spanning segment. Over 38 to 81 (LFSPDVCWDRNNPEPWNKLGPNDQYKFYSVNVDYDKLKKERPDF) the chain is Mitochondrial intermembrane. The residue at position 66 (Ser66) is a Phosphoserine.

It belongs to the complex IV NDUFA4 subunit family. As to quaternary structure, component of the cytochrome c oxidase (complex IV, CIV), a multisubunit enzyme composed of 14 subunits. The complex is composed of a catalytic core of 3 subunits MT-CO1, MT-CO2 and MT-CO3, encoded in the mitochondrial DNA, and 11 supernumerary subunits COX4I, COX5A, COX5B, COX6A, COX6B, COX6C, COX7A, COX7B, COX7C, COX8 and NDUFA4, which are encoded in the nuclear genome. The complex exists as a monomer or a dimer and forms supercomplexes (SCs) in the inner mitochondrial membrane with NADH-ubiquinone oxidoreductase (complex I, CI) and ubiquinol-cytochrome c oxidoreductase (cytochrome b-c1 complex, complex III, CIII), resulting in different assemblies (supercomplex SCI(1)III(2)IV(1) and megacomplex MCI(2)III(2)IV(2)). Interacts with RAB5IF. Interacts with FLVCR2; this interaction occurs in the absence of heme and is disrupted upon heme binding.

The protein localises to the mitochondrion inner membrane. Functionally, component of the cytochrome c oxidase, the last enzyme in the mitochondrial electron transport chain which drives oxidative phosphorylation. The respiratory chain contains 3 multisubunit complexes succinate dehydrogenase (complex II, CII), ubiquinol-cytochrome c oxidoreductase (cytochrome b-c1 complex, complex III, CIII) and cytochrome c oxidase (complex IV, CIV), that cooperate to transfer electrons derived from NADH and succinate to molecular oxygen, creating an electrochemical gradient over the inner membrane that drives transmembrane transport and the ATP synthase. Cytochrome c oxidase is the component of the respiratory chain that catalyzes the reduction of oxygen to water. Electrons originating from reduced cytochrome c in the intermembrane space (IMS) are transferred via the dinuclear copper A center (CU(A)) of subunit 2 and heme A of subunit 1 to the active site in subunit 1, a binuclear center (BNC) formed by heme A3 and copper B (CU(B)). The BNC reduces molecular oxygen to 2 water molecules unsing 4 electrons from cytochrome c in the IMS and 4 protons from the mitochondrial matrix. NDUFA4 is required for complex IV maintenance. This is Cytochrome c oxidase subunit NDUFA4 (NDUFA4) from Macaca fascicularis (Crab-eating macaque).